We begin with the raw amino-acid sequence, 159 residues long: Phosphopantetheine adenylyltransferase (159 aa).

Substrate is bound at residue Thr-10. ATP-binding positions include 10–11 (TF) and His-18. Lys-42, Met-74, and Arg-88 together coordinate substrate. ATP is bound by residues 89 to 91 (GLR), Glu-99, and 124 to 130 (WSFISSS).

Belongs to the bacterial CoaD family. As to quaternary structure, homohexamer. It depends on Mg(2+) as a cofactor.

It localises to the cytoplasm. The catalysed reaction is (R)-4'-phosphopantetheine + ATP + H(+) = 3'-dephospho-CoA + diphosphate. The protein operates within cofactor biosynthesis; coenzyme A biosynthesis; CoA from (R)-pantothenate: step 4/5. In terms of biological role, reversibly transfers an adenylyl group from ATP to 4'-phosphopantetheine, yielding dephospho-CoA (dPCoA) and pyrophosphate. The sequence is that of Phosphopantetheine adenylyltransferase from Yersinia pseudotuberculosis serotype O:3 (strain YPIII).